Here is a 44-residue protein sequence, read N- to C-terminus: uncharacterized protein (44 aa).

This is an uncharacterized protein from Caenorhabditis elegans.